Reading from the N-terminus, the 74-residue chain is Delta-actitoxin-Amc3a (74 aa).

Positions Met1–Ala19 are cleaved as a signal peptide. The propeptide occupies Glu20 to Leu24. The residue at position 29 (Pro29) is a Hydroxyproline. Disulfide bonds link Cys30-Cys70, Cys32-Cys60, and Cys53-Cys71. A Glutamine amide modification is found at Gln73.

This sequence belongs to the sea anemone sodium channel inhibitory toxin family. Type I subfamily.

It is found in the secreted. The protein resides in the nematocyst. Inhibits voltage-gated sodium channels (Nav). The sequence is that of Delta-actitoxin-Amc3a from Antheopsis maculata (Sea anemone).